Reading from the N-terminus, the 109-residue chain is Iron-sulfur cluster assembly protein CyaY (109 aa).

It belongs to the frataxin family.

In terms of biological role, involved in iron-sulfur (Fe-S) cluster assembly. May act as a regulator of Fe-S biogenesis. This Bordetella petrii (strain ATCC BAA-461 / DSM 12804 / CCUG 43448) protein is Iron-sulfur cluster assembly protein CyaY.